We begin with the raw amino-acid sequence, 231 residues long: MMTTLTARPEAITFDPQQSALIVVDMQNAYATPGGYLDLAGFDVSTTRPVIANIQTAVTAARAAGMLIIWFQNGWDEQYVEAGGPGSPNFHKSNALKTMRKQPQLQGKLLAKGSWDYQLVDELVPQPGDIVLPKPRYSGFFNTPLDSILRSRGIRHLVFTGIATNVCVESTLRDGFFLEYFGVVLEDATHQAGPEFVQKAALFNIETFFGWVSDVETFCDALSPTSFARIA.

The Proton acceptor role is filled by Asp25. Lys134 is a catalytic residue. Catalysis depends on Cys167, which acts as the Nucleophile.

Belongs to the isochorismatase family. RutB subfamily.

The catalysed reaction is (Z)-3-ureidoacrylate + H2O + H(+) = (Z)-3-aminoacrylate + NH4(+) + CO2. It catalyses the reaction (Z)-3-ureidoacrylate + H2O = (Z)-3-aminoacrylate + carbamate + H(+). The enzyme catalyses (Z)-2-methylureidoacrylate + H2O + H(+) = (Z)-2-methylaminoacrylate + NH4(+) + CO2. In terms of biological role, hydrolyzes ureidoacrylate to form aminoacrylate and carbamate. The carbamate hydrolyzes spontaneously, thereby releasing one of the nitrogen atoms of the pyrimidine ring as ammonia and one of its carbon atoms as CO2. The protein is Ureidoacrylate amidohydrolase RutB of Escherichia coli O139:H28 (strain E24377A / ETEC).